We begin with the raw amino-acid sequence, 440 residues long: Argininosuccinate lyase (440 aa).

It belongs to the lyase 1 family. Argininosuccinate lyase subfamily.

Its subcellular location is the cytoplasm. It catalyses the reaction 2-(N(omega)-L-arginino)succinate = fumarate + L-arginine. Its pathway is amino-acid biosynthesis; L-arginine biosynthesis; L-arginine from L-ornithine and carbamoyl phosphate: step 3/3. This chain is Argininosuccinate lyase, found in Clostridium botulinum (strain Kyoto / Type A2).